We begin with the raw amino-acid sequence, 240 residues long: Glutathione-independent glyoxalase hsp3102 (240 aa).

Residues Cys141, His142, and Glu175 contribute to the active site.

It belongs to the peptidase C56 family. HSP31-like subfamily.

The protein localises to the cytoplasm. It localises to the nucleus. The enzyme catalyses methylglyoxal + H2O = (R)-lactate + H(+). Catalyzes the conversion of methylglyoxal (MG) to D-lactate in a single glutathione (GSH)-independent step. May play a role in detoxifying endogenously produced glyoxals. Involved in protection against reactive oxygen species (ROS). The protein is Glutathione-independent glyoxalase hsp3102 of Schizosaccharomyces pombe (strain 972 / ATCC 24843) (Fission yeast).